Here is a 179-residue protein sequence, read N- to C-terminus: Large ribosomal subunit protein uL5 (179 aa).

It belongs to the universal ribosomal protein uL5 family. In terms of assembly, part of the 50S ribosomal subunit; part of the 5S rRNA/L5/L18/L25 subcomplex. Contacts the 5S rRNA and the P site tRNA. Forms a bridge to the 30S subunit in the 70S ribosome.

Its function is as follows. This is one of the proteins that bind and probably mediate the attachment of the 5S RNA into the large ribosomal subunit, where it forms part of the central protuberance. In the 70S ribosome it contacts protein S13 of the 30S subunit (bridge B1b), connecting the 2 subunits; this bridge is implicated in subunit movement. Contacts the P site tRNA; the 5S rRNA and some of its associated proteins might help stabilize positioning of ribosome-bound tRNAs. The polypeptide is Large ribosomal subunit protein uL5 (Methylococcus capsulatus (strain ATCC 33009 / NCIMB 11132 / Bath)).